Consider the following 502-residue polypeptide: Betaine aldehyde dehydrogenase, chloroplastic (502 aa).

Residues methionine 1 to alanine 7 constitute a chloroplast transit peptide. Glycine 240 to glycine 245 contacts NAD(+). Residue glutamate 262 is the Proton acceptor of the active site. Catalysis depends on cysteine 296, which acts as the Nucleophile.

The protein belongs to the aldehyde dehydrogenase family. Homodimer.

It is found in the plastid. The protein resides in the chloroplast. The catalysed reaction is betaine aldehyde + NAD(+) + H2O = glycine betaine + NADH + 2 H(+). The protein operates within amine and polyamine biosynthesis; betaine biosynthesis via choline pathway; betaine from betaine aldehyde: step 1/1. The chain is Betaine aldehyde dehydrogenase, chloroplastic from Atriplex hortensis (Mountain spinach).